The sequence spans 311 residues: Protoheme IX farnesyltransferase (311 aa).

Helical transmembrane passes span 38 to 58, 62 to 82, 113 to 133, 134 to 154, 162 to 182, 188 to 208, 230 to 250, 251 to 271, and 286 to 306; these read IKVVALLVLTALVGLALAPDM, YFVQLLSLFGIGLLSSSAAVI, LIFSAVIGTLGFSLLVFAANW, LTAQMTLFALVGYAFVYTMFL, IVIGGLAGAMPPLLGWISETG, PWILVMIIFTWTPPHFWALAI, FTKTCILLYSLLLTVVCFLPF, LIHMSGYLYLFVAMLINIIFI, and ALNLFKYSILHLTLLFIALFA.

Belongs to the UbiA prenyltransferase family. Protoheme IX farnesyltransferase subfamily.

It is found in the cell inner membrane. It catalyses the reaction heme b + (2E,6E)-farnesyl diphosphate + H2O = Fe(II)-heme o + diphosphate. It functions in the pathway porphyrin-containing compound metabolism; heme O biosynthesis; heme O from protoheme: step 1/1. Its function is as follows. Converts heme B (protoheme IX) to heme O by substitution of the vinyl group on carbon 2 of heme B porphyrin ring with a hydroxyethyl farnesyl side group. The protein is Protoheme IX farnesyltransferase of Psychromonas ingrahamii (strain DSM 17664 / CCUG 51855 / 37).